The following is a 512-amino-acid chain: Glutathione-binding protein GsiB (512 aa).

The N-terminal stretch at 1–26 (MARAVHRSGLVALGIATALMASCAFA) is a signal peptide.

The protein belongs to the bacterial solute-binding protein 5 family. The complex is composed of two ATP-binding proteins (GsiA), two transmembrane proteins (GsiC and GsiD) and a solute-binding protein (GsiB).

The protein resides in the periplasm. Part of the ABC transporter complex GsiABCD involved in glutathione import. Binds glutathione. The sequence is that of Glutathione-binding protein GsiB from Escherichia coli O1:K1 / APEC.